Here is a 337-residue protein sequence, read N- to C-terminus: Holliday junction branch migration complex subunit RuvB (337 aa).

The segment at 1-182 (MEDRMVSASY…FGVLSAMEFY (182 aa)) is large ATPase domain (RuvB-L). The ATP site is built by leucine 21, arginine 22, glycine 63, lysine 66, threonine 67, threonine 68, arginine 172, tyrosine 182, and arginine 219. Threonine 67 is a binding site for Mg(2+). Positions 183–253 (NEDELKEIIL…IAKNALSLLE (71 aa)) are small ATPAse domain (RuvB-S). The segment at 256-337 (GEGFDKIDNK…REFKEQTKLT (82 aa)) is head domain (RuvB-H). DNA is bound by residues arginine 311 and arginine 316.

Belongs to the RuvB family. Homohexamer. Forms an RuvA(8)-RuvB(12)-Holliday junction (HJ) complex. HJ DNA is sandwiched between 2 RuvA tetramers; dsDNA enters through RuvA and exits via RuvB. An RuvB hexamer assembles on each DNA strand where it exits the tetramer. Each RuvB hexamer is contacted by two RuvA subunits (via domain III) on 2 adjacent RuvB subunits; this complex drives branch migration. In the full resolvosome a probable DNA-RuvA(4)-RuvB(12)-RuvC(2) complex forms which resolves the HJ.

The protein localises to the cytoplasm. It carries out the reaction ATP + H2O = ADP + phosphate + H(+). In terms of biological role, the RuvA-RuvB-RuvC complex processes Holliday junction (HJ) DNA during genetic recombination and DNA repair, while the RuvA-RuvB complex plays an important role in the rescue of blocked DNA replication forks via replication fork reversal (RFR). RuvA specifically binds to HJ cruciform DNA, conferring on it an open structure. The RuvB hexamer acts as an ATP-dependent pump, pulling dsDNA into and through the RuvAB complex. RuvB forms 2 homohexamers on either side of HJ DNA bound by 1 or 2 RuvA tetramers; 4 subunits per hexamer contact DNA at a time. Coordinated motions by a converter formed by DNA-disengaged RuvB subunits stimulates ATP hydrolysis and nucleotide exchange. Immobilization of the converter enables RuvB to convert the ATP-contained energy into a lever motion, pulling 2 nucleotides of DNA out of the RuvA tetramer per ATP hydrolyzed, thus driving DNA branch migration. The RuvB motors rotate together with the DNA substrate, which together with the progressing nucleotide cycle form the mechanistic basis for DNA recombination by continuous HJ branch migration. Branch migration allows RuvC to scan DNA until it finds its consensus sequence, where it cleaves and resolves cruciform DNA. The protein is Holliday junction branch migration complex subunit RuvB of Clostridium novyi (strain NT).